Here is a 271-residue protein sequence, read N- to C-terminus: 3-methyl-2-oxobutanoate hydroxymethyltransferase (271 aa).

Residues aspartate 49 and aspartate 88 each contribute to the Mg(2+) site. Residues 49–50 (DS), aspartate 88, and lysine 118 each bind 3-methyl-2-oxobutanoate. Glutamate 120 is a binding site for Mg(2+). Glutamate 187 acts as the Proton acceptor in catalysis.

Belongs to the PanB family. In terms of assembly, homodecamer; pentamer of dimers. The cofactor is Mg(2+).

The protein localises to the cytoplasm. The catalysed reaction is 3-methyl-2-oxobutanoate + (6R)-5,10-methylene-5,6,7,8-tetrahydrofolate + H2O = 2-dehydropantoate + (6S)-5,6,7,8-tetrahydrofolate. Its pathway is cofactor biosynthesis; (R)-pantothenate biosynthesis; (R)-pantoate from 3-methyl-2-oxobutanoate: step 1/2. In terms of biological role, catalyzes the reversible reaction in which hydroxymethyl group from 5,10-methylenetetrahydrofolate is transferred onto alpha-ketoisovalerate to form ketopantoate. The protein is 3-methyl-2-oxobutanoate hydroxymethyltransferase of Bartonella tribocorum (strain CIP 105476 / IBS 506).